Here is a 90-residue protein sequence, read N- to C-terminus: Probable Fe(2+)-trafficking protein (90 aa).

This sequence belongs to the Fe(2+)-trafficking protein family.

Functionally, could be a mediator in iron transactions between iron acquisition and iron-requiring processes, such as synthesis and/or repair of Fe-S clusters in biosynthetic enzymes. This is Probable Fe(2+)-trafficking protein from Nitrosomonas europaea (strain ATCC 19718 / CIP 103999 / KCTC 2705 / NBRC 14298).